A 1563-amino-acid polypeptide reads, in one-letter code: Ribulose bisphosphate carboxylase (1563 aa).

Residues H32 and S79 each contribute to the substrate site. A propeptide spans 197-217 (LAAAFVGASTTRKASSVARRA) (linker). N328 serves as a coordination point for substrate. K383 (proton acceptor) is an active-site residue. K385 contacts substrate. The Mg(2+) site is built by K408, D410, and E411. K408 bears the N6-carboxylysine mark. H504 serves as the catalytic Proton acceptor. 3 residues coordinate substrate: R505, H538, and S585. The propeptide at 703–723 (LAAAFVGASTTRKASSVARRA) is linker. N834 is a binding site for substrate. Residue K889 is the Proton acceptor of the active site. K891 contacts substrate. K914, D916, and E917 together coordinate Mg(2+). K914 carries the post-translational modification N6-carboxylysine. Residue H1010 is the Proton acceptor of the active site. R1011, H1044, and S1091 together coordinate substrate. A propeptide spans 1209 to 1229 (LAAAFVGASTTRKASSVARRA) (linker). N1340 provides a ligand contact to substrate. K1395 (proton acceptor) is an active-site residue. K1397 contacts substrate. Positions 1420, 1422, and 1423 each coordinate Mg(2+). K1420 is modified (N6-carboxylysine). Residue H1516 is the Proton acceptor of the active site. The substrate site is built by R1517 and H1550.

This sequence belongs to the RuBisCO large chain family. Type II subfamily. Homodimer. Requires Mg(2+) as cofactor. In Western blots an approximately 220 kDa polyprotein and 2 smaller proteins of about 55 and 52 kDa are detected, suggesting the polyprotein may be cleaved at one end of the linker and then at the other end to give mature RuBisCO.

It localises to the plastid. Its subcellular location is the chloroplast. The catalysed reaction is 2 (2R)-3-phosphoglycerate + 2 H(+) = D-ribulose 1,5-bisphosphate + CO2 + H2O. It carries out the reaction D-ribulose 1,5-bisphosphate + O2 = 2-phosphoglycolate + (2R)-3-phosphoglycerate + 2 H(+). Functionally, ruBisCO catalyzes two reactions: the carboxylation of D-ribulose 1,5-bisphosphate, the primary event in carbon dioxide fixation, as well as the oxidative fragmentation of the pentose substrate. Both reactions occur simultaneously and in competition at the same active site. The polypeptide is Ribulose bisphosphate carboxylase (rbcL) (Prorocentrum minimum (Dinoflagellate)).